A 195-amino-acid chain; its full sequence is Segregation and condensation protein B (195 aa).

It belongs to the ScpB family. Homodimer. Homodimerization may be required to stabilize the binding of ScpA to the Smc head domains. Component of a cohesin-like complex composed of ScpA, ScpB and the Smc homodimer, in which ScpA and ScpB bind to the head domain of Smc. The presence of the three proteins is required for the association of the complex with DNA.

It is found in the cytoplasm. Its function is as follows. Participates in chromosomal partition during cell division. May act via the formation of a condensin-like complex containing Smc and ScpA that pull DNA away from mid-cell into both cell halves. The protein is Segregation and condensation protein B of Clostridium perfringens (strain ATCC 13124 / DSM 756 / JCM 1290 / NCIMB 6125 / NCTC 8237 / Type A).